The primary structure comprises 336 residues: UPF0324 membrane protein BT_1919 (336 aa).

The next 8 membrane-spanning stretches (helical) occupy residues 2 to 19 (LHGVLLIALFSCAAFYIG), 23 to 45 (FVRSISFSPMIVGIILGMLYANS), 85 to 107 (IGLPAMLIDVIIVAVTICGGIYL), 117 to 134 (IALLTSIGSGICGAAAIL), 147 to 169 (TAVSVSTVVIFGTISMFLYPFLY), 210 to 232 (AIIVKMIRVMMLVPVLLITTYLV), 253 to 275 (WFAIGFMGVIAFNSFDLLPAQLV), and 310 to 332 (FVLALLLYVWLVVGGYFLVKYLT).

The protein belongs to the UPF0324 family.

Its subcellular location is the cell membrane. The chain is UPF0324 membrane protein BT_1919 from Bacteroides thetaiotaomicron (strain ATCC 29148 / DSM 2079 / JCM 5827 / CCUG 10774 / NCTC 10582 / VPI-5482 / E50).